The following is a 213-amino-acid chain: Anti-sigma-W factor RsiW (213 aa).

Residues 1–86 (MSCEQHYRTL…TNRFKVWMRR (86 aa)) are Cytoplasmic-facing. 3 residues coordinate Zn(2+): histidine 30, cysteine 34, and cysteine 37. Residues 87–109 (YPLAVAAAVFVLLMSTSLFSMWS) traverse the membrane as a helical segment. The Extracellular segment spans residues 110-213 (SDGEHVTVTG…ISDEKNSPSS (104 aa)).

It belongs to the zinc-associated anti-sigma factor (ZAS) superfamily. Anti-sigma-W factor family. It depends on Zn(2+) as a cofactor. Is processed by three successive proteolytic events. First, the extracellular region of RsiW is cleaved by PrsW (Site-1 cleavage) in response to cell envelope stresses. Next, it undergoes cleavage at an intramembrane site (Site-2 cleavage) mediated by RasP. This cleavage uncovers a cryptic proteolytic tag with conserved alanine residues in the transmembrane segment, that is recognized mainly by the ClpXP protease, which completely degrades the protein in the cytoplasm and leads to the induction of the sigma-W-controlled genes.

The protein resides in the membrane. In terms of biological role, is the anti-sigma factor for SigW. The presence of RsiW leads to the inactivation of SigW, and its proteolytic destruction to sigma-W activation. This Halalkalibacterium halodurans (strain ATCC BAA-125 / DSM 18197 / FERM 7344 / JCM 9153 / C-125) (Bacillus halodurans) protein is Anti-sigma-W factor RsiW (rsiW).